Consider the following 1020-residue polypeptide: Neurofilament heavy polypeptide (1020 aa).

Residues 1 to 100 are head; it reads MMSFGGADAL…VATSRSEKEQ (100 aa). Positions 58 to 83 are disordered; the sequence is VSASPSRFRGAGAASSTDSLDTLSNG. Residues 71 to 82 show a composition bias toward polar residues; it reads ASSTDSLDTLSN. Residues serine 76 and serine 124 each carry the phosphoserine modification. Residues 97 to 413 form the IF rod domain; it reads EKEQLQALND…KLLEGEECRI (317 aa). Residues 101 to 132 form a coil 1A region; it reads LQALNDRFAGYIDKVRQLEAHNRSLEGEAAAL. A linker 1 region spans residues 133–145; it reads RQQQAGRSAMGEL. The interval 146-244 is coil 1B; the sequence is YEREVREMRG…QEEVGELLGQ (99 aa). Positions 245 to 266 are linker 12; the sequence is IQGSGAAQAQMQAETRDALKCD. Residues 267 to 288 are coil 2A; it reads VTSALREIRAQLEGHAVQSTLQ. The tract at residues 289-292 is linker 2; the sequence is SEEW. A coil 2B region spans residues 293-413; that stretch reads FRVRLDRLSE…KLLEGEECRI (121 aa). Phosphoserine is present on residues serine 347 and serine 421. Residues 414–1020 form a tail region; the sequence is GFGPIPFSLP…ATEDKAAKGK (607 aa). The interval 456-1020 is disordered; it reads IVEEQTEETQ…ATEDKAAKGK (565 aa). Acidic residues-rich tracts occupy residues 459-475 and 483-498; these read EQTEETQVTEEVTEEEE and GKEEEGGEEEEAEGGE. Residues serine 511, serine 526, serine 532, serine 540, serine 546, serine 552, serine 560, serine 566, serine 574, serine 580, serine 586, serine 594, serine 600, serine 606, serine 614, serine 620, serine 628, serine 634, serine 640, serine 648, serine 654, serine 662, serine 668, serine 676, serine 682, serine 690, serine 696, and serine 704 each carry the phosphoserine modification. The segment covering 511–1020 has biased composition (basic and acidic residues); sequence SPEKEAKSPV…ATEDKAAKGK (510 aa). A run of 4 repeats spans residues 525–530, 531–536, 539–544, and 545–550. Residues 525-826 are 30 X 6 AA repeats of K-S-P-[AEPV]-[EAK]-[AEVK]; the sequence is KSPAEAKSPE…KEEVKSPVKE (302 aa). Repeat 5 spans residues 559–564; that stretch reads KSPPEA. 2 repeat units span residues 573–578 and 579–584. 2 consecutive repeat copies span residues 593 to 598 and 599 to 604. Copy 10 of the repeat occupies 613–618; sequence KSPAEA. 4 tandem repeats follow at residues 627 to 632, 633 to 638, 639 to 644, and 647 to 652. 12 repeat units span residues 661 to 666, 667 to 672, 675 to 680, 681 to 686, 689 to 694, 695 to 700, 703 to 708, 709 to 714, 717 to 722, 723 to 728, 737 to 742, and 745 to 750. Phosphoserine occurs at positions 718, 724, and 738. Residues serine 752 and serine 763 each carry the phosphoserine modification. Repeat 27 spans residues 762 to 767; it reads KSPEAK. Threonine 768 carries the post-translational modification Phosphothreonine. Repeat copies occupy residues 786 to 791, 794 to 799, and 821 to 826. Residues serine 787, serine 795, serine 822, and serine 888 each carry the phosphoserine modification.

This sequence belongs to the intermediate filament family. As to quaternary structure, forms heterodimers with NEFL; which can further hetero-oligomerize (in vitro). Forms heterodimers with INA (in vitro). There are a number of repeats of the tripeptide K-S-P, NFH is phosphorylated on a number of the serines in this motif. It is thought that phosphorylation of NFH results in the formation of interfilament cross bridges that are important in the maintenance of axonal caliber. In terms of processing, phosphorylation seems to play a major role in the functioning of the larger neurofilament polypeptides (NF-M and NF-H), the levels of phosphorylation being altered developmentally and coincidentally with a change in the neurofilament function. Post-translationally, phosphorylated in the head and rod regions by the PKC kinase PKN1, leading to the inhibition of polymerization.

The protein localises to the cytoplasm. It is found in the cytoskeleton. Its subcellular location is the cell projection. The protein resides in the axon. In terms of biological role, neurofilaments usually contain three intermediate filament proteins: NEFL, NEFM, and NEFH which are involved in the maintenance of neuronal caliber. NEFH has an important function in mature axons that is not subserved by the two smaller NF proteins. May additionally cooperate with the neuronal intermediate filament proteins PRPH and INA to form neuronal filamentous networks. In Homo sapiens (Human), this protein is Neurofilament heavy polypeptide (NEFH).